Reading from the N-terminus, the 1849-residue chain is Protein virilizer (1849 aa).

Composition is skewed to basic and acidic residues over residues 206-219 (QHYH…QREM), 242-265 (THSE…DWSR), 281-291 (RSRSDADEHKW), 332-347 (HSSE…EERS), and 785-818 (VEAK…AAEE). Disordered stretches follow at residues 206 to 364 (QHYH…DEII), 783 to 818 (RVVE…AAEE), 1557 to 1584 (SASM…SSSG), 1666 to 1686 (GESK…EMTP), 1715 to 1782 (RGRG…NRGS), and 1798 to 1849 (IGSP…PYLR). The span at 1671–1684 (TLNLSGSPQSNREM) shows a compositional bias: polar residues. Over residues 1732-1742 (SRPPNTSRPPS) the composition is skewed to low complexity. The segment covering 1800 to 1818 (SPSSWTESGGGSYRSTSES) has biased composition (polar residues).

This sequence belongs to the vir family. As to quaternary structure, component of the WMM complex, a N6-methyltransferase complex composed of a catalytic subcomplex, named MAC, and of an associated subcomplex, named MACOM. The MAC subcomplex is composed of Ime4/Mettl3 and Mettl14. The MACOM subcomplex is composed of fl(2)d, Flacc/Xio, Hakai, vir, and, in some cases of nito. Part of a complex containing fl(2)d, Sxl and vir.

Its subcellular location is the nucleus. In terms of biological role, associated component of the WMM complex, a complex that mediates N6-methyladenosine (m6A) methylation of mRNAs, a modification that plays a role in the efficiency of mRNA splicing and is required for sex determination. Required for sex determination and dosage compensation via Sxl alternative splicing: m6A methylation acts as a key regulator of Sxl pre-mRNA and promotes female-specific alternative splicing of Sxl, which determines female physiognomy. M6A methylation is also required for neuronal functions. Required for proper inclusion of regulated exons in Ubx transcripts, leading to isoforms Ia/b and IIa/b. The sequence is that of Protein virilizer (vir) from Drosophila pseudoobscura pseudoobscura (Fruit fly).